The following is a 658-amino-acid chain: Glycogen debranching enzyme (658 aa).

D336 functions as the Nucleophile in the catalytic mechanism. Catalysis depends on E371, which acts as the Proton donor. Residues 459 to 486 are disordered; it reads EANGEENRDGTNSNYSDNNGKEGLGGPL.

Belongs to the glycosyl hydrolase 13 family.

It catalyses the reaction Hydrolysis of (1-&gt;6)-alpha-D-glucosidic linkages to branches with degrees of polymerization of three or four glucose residues in limit dextrin.. It functions in the pathway glycan degradation; glycogen degradation. Functionally, removes maltotriose and maltotetraose chains that are attached by 1,6-alpha-linkage to the limit dextrin main chain, generating a debranched limit dextrin. This is Glycogen debranching enzyme from Salmonella gallinarum (strain 287/91 / NCTC 13346).